Here is a 302-residue protein sequence, read N- to C-terminus: MPHPSLKSNRALPLLTFARTHSFAIPAICVYNLEGILAIIRAAEHKRSPAMILLFPWAIQYADSLLVRTAASACRAASVPITLHLDHAQDPEIIKRAADLSRSETHEPGFDSIMVDMSHFSKEENLRLTRELVAYCNARGIATEAEPGRIEGGEDGVQDTVDLEGVLTTPEESEEFVATGINWLAPAFGNVHGNYGPRGVQLDYERLQRINEAVGERVGLVLHGADPFTKEIFEKCIERGVAKVNVNRAVNNEYVKVMREKAGSLPITRLHEEVTNAMQAAVEKIMDMIDSTGKAEFMMDEK.

The active-site Proton donor is aspartate 86. Residues histidine 87, aspartate 116, glutamate 146, and histidine 192 each coordinate Zn(2+). Residue glycine 193 participates in dihydroxyacetone phosphate binding. Histidine 223 lines the Zn(2+) pocket. Residues glycine 224 to aspartate 226 and asparagine 245 to arginine 248 each bind dihydroxyacetone phosphate.

It belongs to the class II fructose-bisphosphate aldolase family. Homodimer. Requires Zn(2+) as cofactor.

The enzyme catalyses beta-D-fructose 1,6-bisphosphate = D-glyceraldehyde 3-phosphate + dihydroxyacetone phosphate. The protein operates within carbohydrate degradation; glycolysis; D-glyceraldehyde 3-phosphate and glycerone phosphate from D-glucose: step 4/4. In terms of biological role, catalyzes the aldol condensation of dihydroxyacetone phosphate (DHAP or glycerone-phosphate) with glyceraldehyde 3-phosphate (G3P) to form fructose 1,6-bisphosphate (FBP) in gluconeogenesis and the reverse reaction in glycolysis. This Coccidioides immitis (strain RS) (Valley fever fungus) protein is Putative fructose-bisphosphate aldolase.